The chain runs to 334 residues: MGMKKSRPRRGSLAFSPRKRAKKLVPKIRSWPADKKVGLQAFPVYKAGTTHALLIENNPKSPNNGQEVFTPVTVLETPDVTVAGIRLYEKTTKGLQALTEVWAEQLDGDLGRKLTLVKKEEKKTADALDAVLEKATEVRAIVHTNPKTTGIPKKKPEVVEIRIGGSSVAERLAYAKEILGKTLAISDVFEAGEIIDTLAITKGKGFQGSVKRWGIKVQFGKHQRKGVGRHTGSIGPWRPRRVMWTVPLPGQMGFHQRTEYNKRILKLGSEGAEITPKGGFLNYGAVKNGYVVVKGTVQGPAKRLVVLRGSVRAAEDKFGLPEVAYISTESKQGN.

The span at 1-10 (MGMKKSRPRR) shows a compositional bias: basic residues. The segment at 1–20 (MGMKKSRPRRGSLAFSPRKR) is disordered.

Belongs to the universal ribosomal protein uL3 family. As to quaternary structure, part of the 50S ribosomal subunit. Forms a cluster with proteins L14 and L24e.

One of the primary rRNA binding proteins, it binds directly near the 3'-end of the 23S rRNA, where it nucleates assembly of the 50S subunit. This Methanococcus maripaludis (strain C6 / ATCC BAA-1332) protein is Large ribosomal subunit protein uL3.